A 455-amino-acid chain; its full sequence is Serine--tRNA ligase (455 aa).

252–254 (TSE) is a binding site for L-serine. Residues 283–285 (RKE) and V299 contribute to the ATP site. Position 306 (E306) interacts with L-serine. 370-373 (EVVS) provides a ligand contact to ATP. Residue T406 participates in L-serine binding.

It belongs to the class-II aminoacyl-tRNA synthetase family. Type-1 seryl-tRNA synthetase subfamily. As to quaternary structure, homodimer. The tRNA molecule binds across the dimer.

The protein localises to the cytoplasm. It catalyses the reaction tRNA(Ser) + L-serine + ATP = L-seryl-tRNA(Ser) + AMP + diphosphate + H(+). The catalysed reaction is tRNA(Sec) + L-serine + ATP = L-seryl-tRNA(Sec) + AMP + diphosphate + H(+). The protein operates within aminoacyl-tRNA biosynthesis; selenocysteinyl-tRNA(Sec) biosynthesis; L-seryl-tRNA(Sec) from L-serine and tRNA(Sec): step 1/1. Catalyzes the attachment of serine to tRNA(Ser). Is also able to aminoacylate tRNA(Sec) with serine, to form the misacylated tRNA L-seryl-tRNA(Sec), which will be further converted into selenocysteinyl-tRNA(Sec). This chain is Serine--tRNA ligase, found in Thermococcus sibiricus (strain DSM 12597 / MM 739).